A 61-amino-acid polypeptide reads, in one-letter code: MAKTALKNKAAGKPKFKVRAYTRCQVCGRPHSVYRKFGLCRICLREKAHRGELPGVTKSSW.

Residues cysteine 24, cysteine 27, cysteine 40, and cysteine 43 each contribute to the Zn(2+) site.

This sequence belongs to the universal ribosomal protein uS14 family. Zinc-binding uS14 subfamily. Part of the 30S ribosomal subunit. Contacts proteins S3 and S10. It depends on Zn(2+) as a cofactor.

Its function is as follows. Binds 16S rRNA, required for the assembly of 30S particles and may also be responsible for determining the conformation of the 16S rRNA at the A site. This Bifidobacterium longum (strain DJO10A) protein is Small ribosomal subunit protein uS14.